Here is a 176-residue protein sequence, read N- to C-terminus: MTNIRKSHPLLKIINKSFVDLPAPSNISSWWNFGSLLGICLMLQIMTGLFLAMHYTADTTTAFNSVTHICRDVNYGWMLRYLHANGASMFFICLYLHVGRGLYYGSYLYKETWNVGVLLLFTVMATAFMGYVLPWGQMSFWGATVITNLLSAIPYIGTTLVEWIWGGFSVDKATLT.

3 helical membrane passes run 33-53, 77-98, and 113-133; these read FGSLLGICLMLQIMTGLFLAM, WMLRYLHANGASMFFICLYLHV, and WNVGVLLLFTVMATAFMGYVL. His-83 and His-97 together coordinate heme b.

It belongs to the cytochrome b family. In terms of assembly, the cytochrome bc1 complex contains 11 subunits: 3 respiratory subunits (MT-CYB, CYC1 and UQCRFS1), 2 core proteins (UQCRC1 and UQCRC2) and 6 low-molecular weight proteins (UQCRH/QCR6, UQCRB/QCR7, UQCRQ/QCR8, UQCR10/QCR9, UQCR11/QCR10 and a cleavage product of UQCRFS1). This cytochrome bc1 complex then forms a dimer. Heme b serves as cofactor.

The protein localises to the mitochondrion inner membrane. Functionally, component of the ubiquinol-cytochrome c reductase complex (complex III or cytochrome b-c1 complex) that is part of the mitochondrial respiratory chain. The b-c1 complex mediates electron transfer from ubiquinol to cytochrome c. Contributes to the generation of a proton gradient across the mitochondrial membrane that is then used for ATP synthesis. The chain is Cytochrome b (MT-CYB) from Idionycteris phyllotis (Allen's big-eared bat).